A 335-amino-acid polypeptide reads, in one-letter code: MNTITVYEHSNFQGLHKTFTSDVPNLVNESFNDCISSVKIVGQPWILHQDINYSGQCLPLEEGEYSGISMNDGASSLRLITDDLSNPQITVYEHVNGGGKALVLTEETNLAFGNMHDNISSHRVQRGAWALYEHINRGGRCIVARAGEYLANYCTIGFNDQVSHVYPLRAGKTSVTATILWDRKKVESERNVQIDQYFYTNNTSIEQQFTATSTKEFEKYVSHSFEFSNETSIKVGTSFTLKGVVDINTEVSNTFTVKKGETESFTTRKKAELSMPVKAPPRSKLTVNFMCKEITISVPVELKIVRGSKTDIETGTYRCESGTETYIDVQSLPIS.

Beta/gamma crystallin 'Greek key' domains lie at 2 to 42 (NTIT…KIVG), 43 to 81 (QPWI…RLIT), 87 to 126 (PQIT…RVQR), and 127 to 169 (GAWA…YPLR).

It belongs to the beta/gamma-crystallin family. In terms of tissue distribution, epidermis specific.

This Cynops pyrrhogaster (Japanese fire-bellied newt) protein is Epidermal differentiation-specific protein.